Consider the following 70-residue polypeptide: ATP synthase subunit c (70 aa).

Helical transmembrane passes span 4-24 and 49-69; these read IAAA…NGLI and GIAL…LAFF.

The protein belongs to the ATPase C chain family. As to quaternary structure, F-type ATPases have 2 components, F(1) - the catalytic core - and F(0) - the membrane proton channel. F(1) has five subunits: alpha(3), beta(3), gamma(1), delta(1), epsilon(1). F(0) has three main subunits: a(1), b(2) and c(10-14). The alpha and beta chains form an alternating ring which encloses part of the gamma chain. F(1) is attached to F(0) by a central stalk formed by the gamma and epsilon chains, while a peripheral stalk is formed by the delta and b chains. The F(1)F(0) complex interacts with SpoIIIJ and YqjG; YqgA is found in the same complex.

The protein localises to the cell membrane. F(1)F(0) ATP synthase produces ATP from ADP in the presence of a proton or sodium gradient. F-type ATPases consist of two structural domains, F(1) containing the extramembraneous catalytic core and F(0) containing the membrane proton channel, linked together by a central stalk and a peripheral stalk. During catalysis, ATP synthesis in the catalytic domain of F(1) is coupled via a rotary mechanism of the central stalk subunits to proton translocation. Functionally, key component of the F(0) channel; it plays a direct role in translocation across the membrane. A homomeric c-ring of between 10-14 subunits forms the central stalk rotor element with the F(1) delta and epsilon subunits. In Bacillus subtilis (strain 168), this protein is ATP synthase subunit c.